We begin with the raw amino-acid sequence, 76 residues long: UPF0248 protein MmarC5_1387 (76 aa).

It belongs to the UPF0248 family.

The protein is UPF0248 protein MmarC5_1387 of Methanococcus maripaludis (strain C5 / ATCC BAA-1333).